Here is a 325-residue protein sequence, read N- to C-terminus: MSVITPDTVEILLTVLKAVVILLVVVTCGAFMSFGERRLLGLFQNRYGPSRVGWGGSLQLVADMIKMFFKEDWVPPFTDRLIFTLAPMIAFCSLLLSFAIVPVAPGWMGADLNIGILFFLMMAGLAVYAVLFAGWSSNNKYSLLGAMRASAQTLSYEVFLGLSLMGVVAQAGSFNMQVIVDSQTHLWNIIPQFFGFLTFIIAGVAVCHRHPFDQPEAEQELADGYHIEYSGMKFGLFFVGEYIGIVTISALIVTLFFGGWHGPWLPPFIWFAIKTAFFMVMFILVRASLPRPRYDQVMAFGWRICLPLTLINLLVTAAVILYHAQ.

9 helical membrane-spanning segments follow: residues 11–31 (ILLTVLKAVVILLVVVTCGAF), 50–69 (SRVGWGGSLQLVADMIKMFF), 81–101 (LIFTLAPMIAFCSLLLSFAIV), 114–134 (IGILFFLMMAGLAVYAVLFAG), 154–174 (LSYEVFLGLSLMGVVAQAGSF), 186–206 (LWNIIPQFFGFLTFIIAGVAV), 237–257 (FFVGEYIGIVTISALIVTLFF), 265–285 (LPPFIWFAIKTAFFMVMFILV), and 304–324 (ICLPLTLINLLVTAAVILYHA).

It belongs to the complex I subunit 1 family. In terms of assembly, NDH-1 is composed of 13 different subunits. Subunits NuoA, H, J, K, L, M, N constitute the membrane sector of the complex.

Its subcellular location is the cell inner membrane. It catalyses the reaction a quinone + NADH + 5 H(+)(in) = a quinol + NAD(+) + 4 H(+)(out). In terms of biological role, NDH-1 shuttles electrons from NADH, via FMN and iron-sulfur (Fe-S) centers, to quinones in the respiratory chain. The immediate electron acceptor for the enzyme in this species is believed to be ubiquinone. Couples the redox reaction to proton translocation (for every two electrons transferred, four hydrogen ions are translocated across the cytoplasmic membrane), and thus conserves the redox energy in a proton gradient. This subunit may bind ubiquinone. This is NADH-quinone oxidoreductase subunit H from Edwardsiella ictaluri (strain 93-146).